Here is a 476-residue protein sequence, read N- to C-terminus: Aspartyl/glutamyl-tRNA(Asn/Gln) amidotransferase subunit B (476 aa).

It belongs to the GatB/GatE family. GatB subfamily. In terms of assembly, heterotrimer of A, B and C subunits.

It catalyses the reaction L-glutamyl-tRNA(Gln) + L-glutamine + ATP + H2O = L-glutaminyl-tRNA(Gln) + L-glutamate + ADP + phosphate + H(+). The enzyme catalyses L-aspartyl-tRNA(Asn) + L-glutamine + ATP + H2O = L-asparaginyl-tRNA(Asn) + L-glutamate + ADP + phosphate + 2 H(+). Allows the formation of correctly charged Asn-tRNA(Asn) or Gln-tRNA(Gln) through the transamidation of misacylated Asp-tRNA(Asn) or Glu-tRNA(Gln) in organisms which lack either or both of asparaginyl-tRNA or glutaminyl-tRNA synthetases. The reaction takes place in the presence of glutamine and ATP through an activated phospho-Asp-tRNA(Asn) or phospho-Glu-tRNA(Gln). The polypeptide is Aspartyl/glutamyl-tRNA(Asn/Gln) amidotransferase subunit B (Enterococcus faecalis (strain ATCC 700802 / V583)).